The primary structure comprises 182 residues: NADH-quinone oxidoreductase subunit B 2 (182 aa).

The [4Fe-4S] cluster site is built by Cys-55, Cys-56, Cys-120, and Cys-150.

It belongs to the complex I 20 kDa subunit family. As to quaternary structure, NDH-1 is composed of 14 different subunits. Subunits NuoB, C, D, E, F, and G constitute the peripheral sector of the complex. The cofactor is [4Fe-4S] cluster.

Its subcellular location is the cell inner membrane. It carries out the reaction a quinone + NADH + 5 H(+)(in) = a quinol + NAD(+) + 4 H(+)(out). NDH-1 shuttles electrons from NADH, via FMN and iron-sulfur (Fe-S) centers, to quinones in the respiratory chain. The immediate electron acceptor for the enzyme in this species is believed to be ubiquinone. Couples the redox reaction to proton translocation (for every two electrons transferred, four hydrogen ions are translocated across the cytoplasmic membrane), and thus conserves the redox energy in a proton gradient. The protein is NADH-quinone oxidoreductase subunit B 2 of Sorangium cellulosum (strain So ce56) (Polyangium cellulosum (strain So ce56)).